Consider the following 146-residue polypeptide: Protein translocase subunit SecE (146 aa).

Positions 1–81 (MSDERYAASD…KVKKPKKSAD (81 aa)) are disordered. Gly residues predominate over residues 10–20 (DGGGTEVGSGT). Residues 45 to 54 (RAANASNTGA) show a composition bias toward polar residues. Positions 69–81 (KEGKVKKPKKSAD) are enriched in basic and acidic residues. Residues 118–138 (VVLAFLAFMVALVGLADFGLA) traverse the membrane as a helical segment.

This sequence belongs to the SecE/SEC61-gamma family. Component of the Sec protein translocase complex. Heterotrimer consisting of SecY, SecE and SecG subunits. The heterotrimers can form oligomers, although 1 heterotrimer is thought to be able to translocate proteins. Interacts with the ribosome. Interacts with SecDF, and other proteins may be involved. Interacts with SecA.

Its subcellular location is the cell membrane. In terms of biological role, essential subunit of the Sec protein translocation channel SecYEG. Clamps together the 2 halves of SecY. May contact the channel plug during translocation. This Mycobacterium leprae (strain TN) protein is Protein translocase subunit SecE.